We begin with the raw amino-acid sequence, 227 residues long: Phosphatidylserine decarboxylase proenzyme (227 aa).

The Schiff-base intermediate with substrate; via pyruvic acid role is filled by S181. Position 181 is a pyruvic acid (Ser); by autocatalysis (S181).

The protein belongs to the phosphatidylserine decarboxylase family. PSD-A subfamily. As to quaternary structure, heterodimer of a large membrane-associated beta subunit and a small pyruvoyl-containing alpha subunit. Pyruvate is required as a cofactor. Is synthesized initially as an inactive proenzyme. Formation of the active enzyme involves a self-maturation process in which the active site pyruvoyl group is generated from an internal serine residue via an autocatalytic post-translational modification. Two non-identical subunits are generated from the proenzyme in this reaction, and the pyruvate is formed at the N-terminus of the alpha chain, which is derived from the carboxyl end of the proenzyme. The post-translation cleavage follows an unusual pathway, termed non-hydrolytic serinolysis, in which the side chain hydroxyl group of the serine supplies its oxygen atom to form the C-terminus of the beta chain, while the remainder of the serine residue undergoes an oxidative deamination to produce ammonia and the pyruvoyl prosthetic group on the alpha chain.

Its subcellular location is the cell membrane. It carries out the reaction a 1,2-diacyl-sn-glycero-3-phospho-L-serine + H(+) = a 1,2-diacyl-sn-glycero-3-phosphoethanolamine + CO2. Its pathway is phospholipid metabolism; phosphatidylethanolamine biosynthesis; phosphatidylethanolamine from CDP-diacylglycerol: step 2/2. In terms of biological role, catalyzes the formation of phosphatidylethanolamine (PtdEtn) from phosphatidylserine (PtdSer). The chain is Phosphatidylserine decarboxylase proenzyme from Anaplasma phagocytophilum (strain HZ).